A 269-amino-acid chain; its full sequence is 4-hydroxy-tetrahydrodipicolinate reductase (269 aa).

NAD(+) is bound by residues 13 to 18 and Asp39; that span reads GASGRM. Arg40 is an NADP(+) binding site. Residues 101–103 and 125–128 contribute to the NAD(+) site; these read GTT and APNM. His158 functions as the Proton donor/acceptor in the catalytic mechanism. His159 serves as a coordination point for (S)-2,3,4,5-tetrahydrodipicolinate. Residue Lys162 is the Proton donor of the active site. 168–169 contacts (S)-2,3,4,5-tetrahydrodipicolinate; it reads GT.

This sequence belongs to the DapB family.

It localises to the cytoplasm. The enzyme catalyses (S)-2,3,4,5-tetrahydrodipicolinate + NAD(+) + H2O = (2S,4S)-4-hydroxy-2,3,4,5-tetrahydrodipicolinate + NADH + H(+). The catalysed reaction is (S)-2,3,4,5-tetrahydrodipicolinate + NADP(+) + H2O = (2S,4S)-4-hydroxy-2,3,4,5-tetrahydrodipicolinate + NADPH + H(+). It participates in amino-acid biosynthesis; L-lysine biosynthesis via DAP pathway; (S)-tetrahydrodipicolinate from L-aspartate: step 4/4. Its function is as follows. Catalyzes the conversion of 4-hydroxy-tetrahydrodipicolinate (HTPA) to tetrahydrodipicolinate. The polypeptide is 4-hydroxy-tetrahydrodipicolinate reductase (Bordetella pertussis (strain Tohama I / ATCC BAA-589 / NCTC 13251)).